The following is a 341-amino-acid chain: Uroporphyrinogen decarboxylase (341 aa).

Residues 23–27 (RQAGR), F42, D73, Y148, S203, and H318 contribute to the substrate site.

It belongs to the uroporphyrinogen decarboxylase family. Homodimer.

The protein localises to the cytoplasm. The enzyme catalyses uroporphyrinogen III + 4 H(+) = coproporphyrinogen III + 4 CO2. Its pathway is porphyrin-containing compound metabolism; protoporphyrin-IX biosynthesis; coproporphyrinogen-III from 5-aminolevulinate: step 4/4. Its function is as follows. Catalyzes the decarboxylation of four acetate groups of uroporphyrinogen-III to yield coproporphyrinogen-III. This chain is Uroporphyrinogen decarboxylase, found in Brucella melitensis biotype 1 (strain ATCC 23456 / CCUG 17765 / NCTC 10094 / 16M).